Reading from the N-terminus, the 425-residue chain is MLELKFVRAHPEIVRADLTKRGDTEKLAWVDEVLEMDRRARELTVAIGDLRNRRNVISREISQARKAGNDITELLAEAAGLPERIKEVETERETLTEAVRYRLMRLPNILHESVPVGKDDSENVEIRRWGEPEIPAFDLENHGALAVEHGWADFERAAKIAGSGFYFLKGRLALLDMALQRFAMDILVEHGYTPIIPPYMMNRAAYEGVTDLADFENVMYRIDGEDEYLIATSEHPMAAMYCDEIFEEKDLPLRLAGLSPCFRREIGAHGLDTKGLFRVHQFHKVEQFIYATPEQSWDLHEELMANAEEVFQRLGLPYRIVSICTGDIGTVAAKKYDLEVWMPREERYREAVSCSNCTAYQAVRLNIKVRNPTEFTEKRYVHTLNSTAIATSRAIRAILENNQNEDGSVTIPKALRPYLYGSETL.

Position 232 to 234 (232 to 234) interacts with L-serine; it reads TSE. ATP is bound by residues 263–265 and valine 279; that span reads RRE. Glutamate 286 is an L-serine binding site. 350-353 lines the ATP pocket; it reads EAVS. Threonine 387 is an L-serine binding site.

Belongs to the class-II aminoacyl-tRNA synthetase family. Type-1 seryl-tRNA synthetase subfamily. In terms of assembly, homodimer. The tRNA molecule binds across the dimer.

It localises to the cytoplasm. It carries out the reaction tRNA(Ser) + L-serine + ATP = L-seryl-tRNA(Ser) + AMP + diphosphate + H(+). The enzyme catalyses tRNA(Sec) + L-serine + ATP = L-seryl-tRNA(Sec) + AMP + diphosphate + H(+). It functions in the pathway aminoacyl-tRNA biosynthesis; selenocysteinyl-tRNA(Sec) biosynthesis; L-seryl-tRNA(Sec) from L-serine and tRNA(Sec): step 1/1. Functionally, catalyzes the attachment of serine to tRNA(Ser). Is also able to aminoacylate tRNA(Sec) with serine, to form the misacylated tRNA L-seryl-tRNA(Sec), which will be further converted into selenocysteinyl-tRNA(Sec). This is Serine--tRNA ligase from Methanoculleus marisnigri (strain ATCC 35101 / DSM 1498 / JR1).